The sequence spans 473 residues: Membrane protein TMS1 (473 aa).

Topologically, residues 1-6 (MGAVIS) are cytoplasmic. Residues 7 to 29 (LPVSMAGSFVASCFGGCCSNLVT) form a helical membrane-spanning segment. The Vacuolar portion of the chain corresponds to 30–38 (KTASSLGSS). Residues 39-61 (SLGTRLLYAVWLLLNSLISWVSY) form a helical membrane-spanning segment. Residues 62–81 (SANKSILWPGKTCTGTGECG) are Cytoplasmic-facing. The helical transmembrane segment at 82–104 (FFTVHRLNFALGCLHLILALVLT) threads the bilayer. The Vacuolar portion of the chain corresponds to 105–118 (GVKSTNDVRAALQN). Residues 119–138 (SWWSLKFILYLCLIVLSFVI) form a helical membrane-spanning segment. The Cytoplasmic portion of the chain corresponds to 139 to 144 (PNDFYI). Residues 145 to 167 (FFSKWVSVPSGAIFILVGLILLV) traverse the membrane as a helical segment. Topologically, residues 168-194 (DFAHEWAETCISHVESEDEDSSFWQRF) are vacuolar. Residues 195–217 (LVLGTTSMYTASIIMTVVMYVMF) form a helical membrane-spanning segment. The Cytoplasmic portion of the chain corresponds to 218-228 (CHQQCNMNQTA). The chain crosses the membrane as a helical span at residues 229-246 (VTVNLILTVITLVLSVNP). The Vacuolar segment spans residues 247-295 (KIQEANPKSGLAQSSMVSVYCTYLTMSAMSSEPDDKMCNPLVRSSGTRK). A helical membrane pass occupies residues 296–318 (FSIILGSLFTFIAIAYTTTRAAA). Over 319 to 398 (NSAFQGTNTN…DDERTGTKYN (80 aa)) the chain is Cytoplasmic. The chain crosses the membrane as a helical span at residues 399 to 421 (YTLFHVIFFLATQWIAILLTINV). The Vacuolar portion of the chain corresponds to 422–435 (TQDDVGDFIPVGRT). The helical transmembrane segment at 436–458 (YFYSWVKIVSAWICYALYGWTVV) threads the bilayer. Topologically, residues 459-473 (APAIMPDRFDYENYY) are cytoplasmic.

This sequence belongs to the TDE1 family.

The protein localises to the membrane. The chain is Membrane protein TMS1 (TMS1) from Saccharomyces cerevisiae (strain ATCC 204508 / S288c) (Baker's yeast).